We begin with the raw amino-acid sequence, 363 residues long: MKKKYRIAVLPGDGIGPEVMREAYKILNILKNHFSLPLETREFNIGGSAIDQEGTALPKKTLLGCENSDAILFGSVGGKKWDDLPINQRPERASLLPLRKHFNLFANLRPAKLYSELKYLSPLRSDIIKNGFDILCIRELTGGLYFGKPTGRLKKNNIEYAFDTEIYYNYEITRIAHLAFQLAQTRNFKICSIDKSNVLNSSVLWREIVKKVSKNYPDVHLSHLYIDNATMQIIKDPNQFDILLCSNLFGDIISDECAIITGSIGMLPSASLNEKKFGLYEPAGGSAPDIEGKNIANPIAQILSVSMLVRYGMNLKTIADKIDQSVISVLKKGYRTADISNNNNYLKTNEMGDVIANTLISGE.

Gly-78–Glu-91 serves as a coordination point for NAD(+). Substrate-binding residues include Arg-99, Arg-109, Arg-138, and Asp-227. Positions 227, 251, and 255 each coordinate Mg(2+). NAD(+) is bound at residue Gly-285–Asn-297.

It belongs to the isocitrate and isopropylmalate dehydrogenases family. LeuB type 1 subfamily. Homodimer. Mg(2+) is required as a cofactor. Requires Mn(2+) as cofactor.

The protein resides in the cytoplasm. The enzyme catalyses (2R,3S)-3-isopropylmalate + NAD(+) = 4-methyl-2-oxopentanoate + CO2 + NADH. Its pathway is amino-acid biosynthesis; L-leucine biosynthesis; L-leucine from 3-methyl-2-oxobutanoate: step 3/4. In terms of biological role, catalyzes the oxidation of 3-carboxy-2-hydroxy-4-methylpentanoate (3-isopropylmalate) to 3-carboxy-4-methyl-2-oxopentanoate. The product decarboxylates to 4-methyl-2 oxopentanoate. This chain is 3-isopropylmalate dehydrogenase, found in Buchnera aphidicola subsp. Uroleucon rudbeckiae.